Reading from the N-terminus, the 287-residue chain is 4-hydroxybenzoate octaprenyltransferase (287 aa).

Transmembrane regions (helical) follow at residues 30-50 (ALWI…FTVG), 89-109 (WEAV…ILPL), 133-153 (FFAI…PMAF), 158-178 (GHVP…SVAY), 199-221 (ALTF…LGIY), and 267-287 (NNWL…AGSF).

This sequence belongs to the UbiA prenyltransferase family. Requires Mg(2+) as cofactor.

The protein resides in the cell inner membrane. The enzyme catalyses all-trans-octaprenyl diphosphate + 4-hydroxybenzoate = 4-hydroxy-3-(all-trans-octaprenyl)benzoate + diphosphate. It functions in the pathway cofactor biosynthesis; ubiquinone biosynthesis. Functionally, catalyzes the prenylation of para-hydroxybenzoate (PHB) with an all-trans polyprenyl group. Mediates the second step in the final reaction sequence of ubiquinone-8 (UQ-8) biosynthesis, which is the condensation of the polyisoprenoid side chain with PHB, generating the first membrane-bound Q intermediate 3-octaprenyl-4-hydroxybenzoate. This is 4-hydroxybenzoate octaprenyltransferase from Paraburkholderia phytofirmans (strain DSM 17436 / LMG 22146 / PsJN) (Burkholderia phytofirmans).